Here is a 74-residue protein sequence, read N- to C-terminus: Exodeoxyribonuclease 7 small subunit (74 aa).

Belongs to the XseB family. Heterooligomer composed of large and small subunits.

It localises to the cytoplasm. It catalyses the reaction Exonucleolytic cleavage in either 5'- to 3'- or 3'- to 5'-direction to yield nucleoside 5'-phosphates.. In terms of biological role, bidirectionally degrades single-stranded DNA into large acid-insoluble oligonucleotides, which are then degraded further into small acid-soluble oligonucleotides. The chain is Exodeoxyribonuclease 7 small subunit from Glaesserella parasuis serovar 5 (strain SH0165) (Haemophilus parasuis).